A 495-amino-acid chain; its full sequence is MERRNPSERGVPAGFSGHASVESGGETQESPATVVFRPPGNNTDGGATAGGSQAAAAAGAEPMEPESRPGPSGMNVVQVAELFPELRRILTINEDGQGLKGVKRERGASEATEEARNLTFSLMTRHRPECVTFQQIKDNCANELDLLAQKYSIEQLTTYWLQPGDDFEEAIRVYAKVALRPDCKYKISKLVNIRNCCYISGNGAEVEIDTEDRVAFRCSMINMWPGVLGMDGVVIMNVRFTGPNFSGTVFLANTNLILHGVSFYGFNNTCVEAWTDVRVRGCAFYCCWKGVVCRPKSRASIKKCLFERCTLGILSEGNSRVRHNVASDCGCFMLVKSVAVIKHNMVCGNCEDRASQMLTCSDGNCHLLKTIHVASHSRKAWPVFEHNILTRCSLHLGNRRGVFLPYQCNLSHTKILLEPESMSKVNLNGVFDMTMKIWKVLRYDETRTRCRPCECGGKHIRNQPVMLDVTEELRPDHLVLACTRAEFGSSDEDTD.

A disordered region spans residues 1–74 (MERRNPSERG…PESRPGPSGM (74 aa)). Residues 40-60 (GNNTDGGATAGGSQAAAAAGA) show a composition bias toward low complexity. A phosphoserine mark is found at Ser-489 and Ser-490. Thr-494 carries the post-translational modification Phosphothreonine.

It belongs to the adenoviridae E1B 55 kDa protein family. As to quaternary structure, interacts with host PML-4 and PML-5; this interaction promotes efficient subnuclear targeting of E1B-55K to PML nuclear bodies. Interacts with E4-ORF3 protein. Interacts with E4-ORF6 protein.

It localises to the host nucleus. Its subcellular location is the host cytoplasm. In terms of biological role, plays a major role to prevent cellular inhibition of viral genome replication. Assembles an SCF-like E3 ubiquitin ligase complex based on the cellular proteins ELOB, ELOC, CUL5 and RBX1, in cooperation with viral E4orf6. This viral RING-type ligase ubiquitinates cellular substrates and targets them to proteasomal degradation: TP53/p53, LIG4, MRE11-RAD50-NBS1 (MRN) complex, ITGA3, DAXX and BLM. E1B-55K probably acts as the substrate-specific adapter of the SCF-like E3 ubiquitin ligase complex. Degradation of host TP53/p53 activity is essential for preventing E1A-induced TP53 accumulation that would otherwise lead to cell apoptosis and growth arrest. E1B-55K also inactivates TP53 transcription-factor activity by binding its transactivation domain. E1B-55K also functions as a SUMO1 E3 ligase for TP53 which causes the latter to be sequestered in promyelocytic leukemia (PML) nuclear bodies thereby contributing to maximal inhibition of TP53 function. The chain is E1B 55 kDa protein (E1B) from Homo sapiens (Human).